A 207-amino-acid polypeptide reads, in one-letter code: N-(5'-phosphoribosyl)anthranilate isomerase (207 aa).

The protein belongs to the TrpF family.

The catalysed reaction is N-(5-phospho-beta-D-ribosyl)anthranilate = 1-(2-carboxyphenylamino)-1-deoxy-D-ribulose 5-phosphate. It functions in the pathway amino-acid biosynthesis; L-tryptophan biosynthesis; L-tryptophan from chorismate: step 3/5. This chain is N-(5'-phosphoribosyl)anthranilate isomerase, found in Legionella pneumophila (strain Corby).